The chain runs to 243 residues: Orotidine 5'-phosphate decarboxylase (243 aa).

Residues Asp-18, Lys-39, 66 to 75, Thr-130, Arg-192, Gln-201, Gly-221, and Arg-222 contribute to the substrate site; that span reads DLKFHDIPAT. Lys-68 (proton donor) is an active-site residue.

The protein belongs to the OMP decarboxylase family. Type 1 subfamily. As to quaternary structure, homodimer.

The enzyme catalyses orotidine 5'-phosphate + H(+) = UMP + CO2. It functions in the pathway pyrimidine metabolism; UMP biosynthesis via de novo pathway; UMP from orotate: step 2/2. Catalyzes the decarboxylation of orotidine 5'-monophosphate (OMP) to uridine 5'-monophosphate (UMP). In Synechococcus sp. (strain WH7803), this protein is Orotidine 5'-phosphate decarboxylase.